The sequence spans 1263 residues: DNA-directed RNA polymerase subunit beta (1263 aa).

The protein belongs to the RNA polymerase beta chain family. In terms of assembly, the RNAP catalytic core consists of 2 alpha, 1 beta, 1 beta' and 1 omega subunit. When a sigma factor is associated with the core the holoenzyme is formed, which can initiate transcription.

It catalyses the reaction RNA(n) + a ribonucleoside 5'-triphosphate = RNA(n+1) + diphosphate. Functionally, DNA-dependent RNA polymerase catalyzes the transcription of DNA into RNA using the four ribonucleoside triphosphates as substrates. The sequence is that of DNA-directed RNA polymerase subunit beta from Thermotoga petrophila (strain ATCC BAA-488 / DSM 13995 / JCM 10881 / RKU-1).